A 517-amino-acid polypeptide reads, in one-letter code: MLHETTNLAPLGQPWIAGLVVVSAVLYLLYSTQRWRANNIPLLNDAGPFDFLQATAVNRFRRDARQLIKSGFDSHRDVFAMRTDVGVELFASPEYADQFRNHPSLKVFPFTAKMHHGHLPGFELCRSQPVEDRIFIESVRVQLAQSLGKLIQPLASDIGQAISDRWPSESGWEEIALGSVVERTISQGTSSVYCLDKAWPEFVVKMEMALGMASAALSAWPVMLRRIVAKFLPECLELYRTMDAGRELMSRDMRRRTALQASTGEAPLNFFEWFKEASHGEEHDELILNLRIAFASMHGLCDHLVKILLRLSEDPQLVDDLRKEVIQVYKTHGWSKTALYHLKLMDSAFKEVQRVDPILFGMPTPISLVQTHSNYETAVGRVAVDDVTLKDGLVIRKGQSIRISGHTMWDEDKYPDAAHFDAYRFYKLRQAPGQENTAQFTSPTSDHLGFGYGGRACPGRFFAAAVLKISLCHLLMKYDIKPADGETGPHVWEFAAAINANMAAKVLVRRRQPEIQL.

Residues 8 to 28 form a helical membrane-spanning segment; it reads LAPLGQPWIAGLVVVSAVLYL. Cysteine 457 is a heme binding site.

This sequence belongs to the cytochrome P450 family. It depends on heme as a cofactor.

It is found in the membrane. The protein operates within secondary metabolite biosynthesis; terpenoid biosynthesis. Functionally, cytochrome P450 monooxygenase; part of the gene cluster that mediates the biosynthesis of calidodehydroaustin, a fungal meroterpenoid. The first step of the pathway is the synthesis of 3,5-dimethylorsellinic acid by the polyketide synthase ausA. 3,5-dimethylorsellinic acid is then prenylated by the polyprenyl transferase ausN. Further epoxidation by the FAD-dependent monooxygenase ausM and cyclization by the probable terpene cyclase ausL lead to the formation of protoaustinoid A. Protoaustinoid A is then oxidized to spiro-lactone preaustinoid A3 by the combined action of the FAD-binding monooxygenases ausB and ausC, and the dioxygenase ausE. Acid-catalyzed keto-rearrangement and ring contraction of the tetraketide portion of preaustinoid A3 by ausJ lead to the formation of preaustinoid A4. The aldo-keto reductase ausK, with the help of ausH, is involved in the next step by transforming preaustinoid A4 into isoaustinone which is in turn hydroxylated by the P450 monooxygenase ausI to form austinolide. The cytochrome P450 monooxygenase ausG modifies austinolide to austinol. Austinol is further acetylated to austin by the O-acetyltransferase ausP, which spontaneously changes to dehydroaustin. The cytochrome P450 monooxygenase ausR then converts dehydroaustin is into 7-dehydrodehydroaustin. The hydroxylation catalyzed by ausR permits the O-acetyltransferase ausQ to add an additional acetyl group to the molecule, leading to the formation of acetoxydehydroaustin. The short chain dehydrogenase ausT catalyzes the reduction of the double bond present between carbon atoms 1 and 2 to convert 7-dehydrodehydroaustin into 1,2-dihydro-7-hydroxydehydroaustin. AusQ catalyzes not only an acetylation reaction but also the addition of the PKS ausV diketide product to 1,2-dihydro-7-hydroxydehydroaustin, forming precalidodehydroaustin. Finally, the iron/alpha-ketoglutarate-dependent dioxygenase converts precalidodehydroaustin into calidodehydroaustin. The chain is Cytochrome P450 monooxygenase ausI from Aspergillus calidoustus.